The sequence spans 553 residues: Protein PALS2 (553 aa).

L27 domains lie at 1-48 (MQQV…EDSK) and 49-107 (LEAV…YDSP). One can recognise a PDZ domain in the interval 129 to 208 (ILGIHKKAGE…SVTLKILPSY (80 aa)). The 70-residue stretch at 228–297 (VRQVFVKCHF…PSQFLEEKRK (70 aa)) folds into the SH3 domain. The region spanning 351-538 (RKTLVLIGAQ…AFEKLQTAIE (188 aa)) is the Guanylate kinase-like domain. Tyrosine 513 carries the phosphotyrosine modification.

The protein belongs to the MAGUK family. Interacts with CADM1. Interacts with the LIN7 proteins.

The protein resides in the membrane. The chain is Protein PALS2 from Mus musculus (Mouse).